A 343-amino-acid polypeptide reads, in one-letter code: Uroporphyrinogen decarboxylase (343 aa).

Residues 23–27, Asp-73, Tyr-151, Ser-206, and His-319 each bind substrate; that span reads RQAGR.

The protein belongs to the uroporphyrinogen decarboxylase family. In terms of assembly, homodimer.

It is found in the cytoplasm. It carries out the reaction uroporphyrinogen III + 4 H(+) = coproporphyrinogen III + 4 CO2. The protein operates within porphyrin-containing compound metabolism; protoporphyrin-IX biosynthesis; coproporphyrinogen-III from 5-aminolevulinate: step 4/4. In terms of biological role, catalyzes the decarboxylation of four acetate groups of uroporphyrinogen-III to yield coproporphyrinogen-III. The chain is Uroporphyrinogen decarboxylase from Sulfurimonas denitrificans (strain ATCC 33889 / DSM 1251) (Thiomicrospira denitrificans (strain ATCC 33889 / DSM 1251)).